The sequence spans 118 residues: Small ribosomal subunit protein uS11 (118 aa).

Belongs to the universal ribosomal protein uS11 family. In terms of assembly, part of the 30S ribosomal subunit. Interacts with proteins S7 and S18. Binds to IF-3.

Located on the platform of the 30S subunit, it bridges several disparate RNA helices of the 16S rRNA. Forms part of the Shine-Dalgarno cleft in the 70S ribosome. The sequence is that of Small ribosomal subunit protein uS11 from Carsonella ruddii (strain PV).